Consider the following 186-residue polypeptide: Shikimate kinase (186 aa).

15 to 20 (GAGKTT) serves as a coordination point for ATP. Thr-19 lines the Mg(2+) pocket. The substrate site is built by Asp-37, Arg-61, and Gly-83. Arg-121 lines the ATP pocket. Arg-140 is a substrate binding site.

The protein belongs to the shikimate kinase family. Monomer. Requires Mg(2+) as cofactor.

Its subcellular location is the cytoplasm. The enzyme catalyses shikimate + ATP = 3-phosphoshikimate + ADP + H(+). Its pathway is metabolic intermediate biosynthesis; chorismate biosynthesis; chorismate from D-erythrose 4-phosphate and phosphoenolpyruvate: step 5/7. Catalyzes the specific phosphorylation of the 3-hydroxyl group of shikimic acid using ATP as a cosubstrate. The chain is Shikimate kinase from Psychrobacter arcticus (strain DSM 17307 / VKM B-2377 / 273-4).